We begin with the raw amino-acid sequence, 325 residues long: Glutarate 2-hydroxylase (325 aa).

3 residues coordinate Fe cation: H160, D162, and H292.

The protein belongs to the glutarate hydroxylase family. As to quaternary structure, homotetramer. Requires Fe(2+) as cofactor.

It catalyses the reaction glutarate + 2-oxoglutarate + O2 = (S)-2-hydroxyglutarate + succinate + CO2. It functions in the pathway amino-acid degradation. Acts as an alpha-ketoglutarate-dependent dioxygenase catalyzing hydroxylation of glutarate (GA) to L-2-hydroxyglutarate (L2HG). Functions in a L-lysine degradation pathway that proceeds via cadaverine, glutarate and L-2-hydroxyglutarate. The polypeptide is Glutarate 2-hydroxylase (Escherichia coli O7:K1 (strain IAI39 / ExPEC)).